Reading from the N-terminus, the 159-residue chain is Cytochrome c-type biogenesis protein CcmE (159 aa).

The Cytoplasmic segment spans residues 1 to 8 (MNIRRKNR). A helical; Signal-anchor for type II membrane protein transmembrane segment spans residues 9 to 29 (LWIACAVLAGLALTIGLVLYA). Residues 30–159 (LRSNIDLFYT…PASVYKDPAS (130 aa)) lie on the Periplasmic side of the membrane. The heme site is built by H130 and Y134. Basic and acidic residues predominate over residues 132–147 (ENYTPPEVEKAMEANH). The tract at residues 132-159 (ENYTPPEVEKAMEANHRRPASVYKDPAS) is disordered.

The protein belongs to the CcmE/CycJ family.

The protein resides in the cell inner membrane. Its function is as follows. Heme chaperone required for the biogenesis of c-type cytochromes. Transiently binds heme delivered by CcmC and transfers the heme to apo-cytochromes in a process facilitated by CcmF and CcmH. This Shigella sonnei (strain Ss046) protein is Cytochrome c-type biogenesis protein CcmE.